Reading from the N-terminus, the 405-residue chain is L-carnitine CoA-transferase (405 aa).

CoA is bound by residues Lys-97 and Arg-104. The active-site Nucleophile is Asp-169.

It belongs to the CoA-transferase III family. CaiB subfamily. Homodimer.

The protein resides in the cytoplasm. The enzyme catalyses crotonobetainyl-CoA + (R)-carnitine = crotonobetaine + (R)-carnitinyl-CoA. It carries out the reaction 4-(trimethylamino)butanoyl-CoA + (R)-carnitine = (R)-carnitinyl-CoA + 4-(trimethylamino)butanoate. Its pathway is amine and polyamine metabolism; carnitine metabolism. Functionally, catalyzes the reversible transfer of the CoA moiety from gamma-butyrobetainyl-CoA to L-carnitine to generate L-carnitinyl-CoA and gamma-butyrobetaine. Is also able to catalyze the reversible transfer of the CoA moiety from gamma-butyrobetainyl-CoA or L-carnitinyl-CoA to crotonobetaine to generate crotonobetainyl-CoA. The sequence is that of L-carnitine CoA-transferase from Shigella flexneri serotype 5b (strain 8401).